Consider the following 640-residue polypeptide: G protein-coupled receptor kinase 1 (640 aa).

The N-terminal stretch occupies residues 1-201; that stretch reads MEIENIVANT…LEKRPVDKHT (201 aa). Positions 52–187 constitute an RGS domain; it reads YAFVVEKQPI…IQTMYFHRFL (136 aa). One can recognise a Protein kinase domain in the interval 202–469; sequence FRLYRVLGKG…AEEIRAHPFF (268 aa). ATP-binding positions include 208–216 and Lys231; that span reads LGKGGFGEV. Asp327 acts as the Proton acceptor in catalysis. One can recognise an AGC-kinase C-terminal domain in the interval 479–544; the sequence is EPVPWKKMEA…GCVSIPWQSE (66 aa). Residues 610–640 form a disordered region; sequence GVDQQQPSTSAKPAAVRSSRAASASGRTSMI. A compositionally biased stretch (low complexity) spans 619–640; that stretch reads SAKPAAVRSSRAASASGRTSMI.

The protein belongs to the protein kinase superfamily. AGC Ser/Thr protein kinase family. GPRK subfamily.

It catalyses the reaction [G-protein-coupled receptor] + ATP = [G-protein-coupled receptor]-phosphate + ADP + H(+). Functionally, specifically phosphorylates the activated forms of G protein-coupled receptors. This is G protein-coupled receptor kinase 1 (grk-1) from Caenorhabditis briggsae.